The primary structure comprises 312 residues: Protein lon-1 (312 aa).

The signal sequence occupies residues 1-18 (MNYLLTALIALLAPISVA). The 123-residue stretch at 87–209 (EHNRYRRMVP…GHRNVFVCHY (123 aa)) folds into the SCP domain. A glycan (N-linked (GlcNAc...) asparagine) is linked at Asn142. Low complexity predominate over residues 265 to 284 (TTTTESTTTSTTTEEPTTTC). The interval 265-312 (TTTTESTTTSTTTEEPTTTCEPDEPEAEGADNNQEEEEENNDGFRMRV) is disordered. Acidic residues predominate over residues 285-305 (EPDEPEAEGADNNQEEEEENN).

Belongs to the CRISP family. Expressed in hypodermal tissues.

In terms of biological role, regulates body size morphogenesis, but does not affect male tail development. This chain is Protein lon-1 (lon-1), found in Caenorhabditis elegans.